Here is an 84-residue protein sequence, read N- to C-terminus: Kidney-associated antigen 1 (84 aa).

The disordered stretch occupies residues Pro-31–Lys-84. The span at Lys-75 to Lys-84 shows a compositional bias: polar residues.

Expressed in testis and kidney, and, at lower levels, in urinary bladder and liver. Expressed by a high proportion of tumors of various histologic origin, including melanomas, sarcomas and colorectal carcinomas.

The chain is Kidney-associated antigen 1 (KAAG1) from Homo sapiens (Human).